Consider the following 372-residue polypeptide: Methylthioribose-1-phosphate isomerase 1 (372 aa).

The active-site Proton donor is aspartate 254.

Belongs to the eIF-2B alpha/beta/delta subunits family. MtnA subfamily.

Its subcellular location is the cytoplasm. It localises to the nucleus. It catalyses the reaction 5-(methylsulfanyl)-alpha-D-ribose 1-phosphate = 5-(methylsulfanyl)-D-ribulose 1-phosphate. It participates in amino-acid biosynthesis; L-methionine biosynthesis via salvage pathway; L-methionine from S-methyl-5-thio-alpha-D-ribose 1-phosphate: step 1/6. In terms of biological role, catalyzes the interconversion of methylthioribose-1-phosphate (MTR-1-P) into methylthioribulose-1-phosphate (MTRu-1-P). This chain is Methylthioribose-1-phosphate isomerase 1, found in Trypanosoma cruzi (strain CL Brener).